Here is a 402-residue protein sequence, read N- to C-terminus: Phosphoglycerate kinase (402 aa).

Residues 24–26 (DFN), R40, 63–66 (HFGR), R122, and R155 each bind substrate. ATP contacts are provided by residues K206, G297, E328, and 357–360 (GGDS).

Belongs to the phosphoglycerate kinase family. As to quaternary structure, monomer.

The protein resides in the cytoplasm. It carries out the reaction (2R)-3-phosphoglycerate + ATP = (2R)-3-phospho-glyceroyl phosphate + ADP. It participates in carbohydrate degradation; glycolysis; pyruvate from D-glyceraldehyde 3-phosphate: step 2/5. In Prochlorococcus marinus (strain MIT 9211), this protein is Phosphoglycerate kinase.